The sequence spans 501 residues: Ribose import ATP-binding protein RbsA (501 aa).

ABC transporter domains are found at residues Leu-5–Lys-241 and Ala-252–Leu-495. Gly-37–Ser-44 is a binding site for ATP.

Belongs to the ABC transporter superfamily. Ribose importer (TC 3.A.1.2.1) family. In terms of assembly, the complex is composed of an ATP-binding protein (RbsA), two transmembrane proteins (RbsC) and a solute-binding protein (RbsB).

It localises to the cell inner membrane. It catalyses the reaction D-ribose(out) + ATP + H2O = D-ribose(in) + ADP + phosphate + H(+). Part of the ABC transporter complex RbsABC involved in ribose import. Responsible for energy coupling to the transport system. The polypeptide is Ribose import ATP-binding protein RbsA (Shigella sonnei (strain Ss046)).